A 175-amino-acid chain; its full sequence is Protein TWIN SISTER of FT (175 aa).

Belongs to the phosphatidylethanolamine-binding protein family.

It is found in the cytoplasm. Functionally, may form complexes with phosphorylated ligands by interfering with kinases and their effectors. In Arabidopsis thaliana (Mouse-ear cress), this protein is Protein TWIN SISTER of FT (TSF).